The following is a 372-amino-acid chain: Aminomethyltransferase (372 aa).

The protein belongs to the GcvT family. The glycine cleavage system is composed of four proteins: P, T, L and H.

It carries out the reaction N(6)-[(R)-S(8)-aminomethyldihydrolipoyl]-L-lysyl-[protein] + (6S)-5,6,7,8-tetrahydrofolate = N(6)-[(R)-dihydrolipoyl]-L-lysyl-[protein] + (6R)-5,10-methylene-5,6,7,8-tetrahydrofolate + NH4(+). The glycine cleavage system catalyzes the degradation of glycine. The polypeptide is Aminomethyltransferase (Prochlorococcus marinus (strain NATL1A)).